The primary structure comprises 119 residues: NADH-quinone oxidoreductase subunit A (119 aa).

3 consecutive transmembrane segments (helical) span residues 9–29, 63–83, and 88–108; these read VLLF…LGYV, LVAI…PWAV, and VGGA…VGFV.

This sequence belongs to the complex I subunit 3 family. As to quaternary structure, NDH-1 is composed of 14 different subunits. Subunits NuoA, H, J, K, L, M, N constitute the membrane sector of the complex.

It localises to the cell inner membrane. The enzyme catalyses a quinone + NADH + 5 H(+)(in) = a quinol + NAD(+) + 4 H(+)(out). Its function is as follows. NDH-1 shuttles electrons from NADH, via FMN and iron-sulfur (Fe-S) centers, to quinones in the respiratory chain. The immediate electron acceptor for the enzyme in this species is believed to be ubiquinone. Couples the redox reaction to proton translocation (for every two electrons transferred, four hydrogen ions are translocated across the cytoplasmic membrane), and thus conserves the redox energy in a proton gradient. The chain is NADH-quinone oxidoreductase subunit A from Delftia acidovorans (strain DSM 14801 / SPH-1).